We begin with the raw amino-acid sequence, 250 residues long: Glycerol uptake facilitator protein-like 5 (250 aa).

2 helical membrane-spanning segments follow: residues 12-32 (EFFGTLILVLLGNGAVANAFL) and 46-66 (GGWLLVASGYGLGVMLPAMMF). The NPA 1 signature appears at 75 to 77 (NPA). A run of 3 helical transmembrane segments spans residues 85-105 (IGIFPWAHVAPYLIWQFLGAI), 142-162 (LNGFVTEMVGTAVLIFGAMGL), and 172-192 (IDIANIGVGLLIAAMVISLGG). The NPA 2 signature appears at 199–201 (NPA). The helical transmembrane segment at 230–250 (VVAPIVGAVIGIWIYKIFFGL) threads the bilayer.

Belongs to the MIP/aquaporin (TC 1.A.8) family.

The protein resides in the cell membrane. Functionally, probable transporter that facilitates the transmembrane diffusion of an unknown substrate. Is not permeable to water, dihydroxyacetone, glycerol, urea, H(2)O(2) and D/L-lactic acid. The protein is Glycerol uptake facilitator protein-like 5 of Lactiplantibacillus plantarum (strain ATCC BAA-793 / NCIMB 8826 / WCFS1) (Lactobacillus plantarum).